Reading from the N-terminus, the 57-residue chain is uncharacterized protein (57 aa).

The interval 31 to 57 is disordered; the sequence is HHQTSSFNPMPSEVSLHTSHNFPHTTF. Residues 33–57 are compositionally biased toward polar residues; sequence QTSSFNPMPSEVSLHTSHNFPHTTF.

This is an uncharacterized protein from Invertebrate iridescent virus 6 (IIV-6).